The primary structure comprises 256 residues: MKNTLLKLGVCVSLLGITPFVSTISSVQAERTVEHKVIKNETGTISISQLNKNVWVHTELGYFSGEAVPSNGLVLNTSKGLVLVDSSWDDKLTKELIEMVEKKFKKRVTDVIITHAHADRIGGMKTLKERGIKAHSTALTAELAKKNGYEEPLGDLQSVTNLKFGNMKVETFYPGKGHTEDNIVVWLPQYQILAGGCLVKSASSKDLGNVADAYVNEWSTSIENVLKRYGNINLVVPGHGEVGDRGLLLHTLDLLK.

A signal peptide spans 1–29; sequence MKNTLLKLGVCVSLLGITPFVSTISSVQA. Zn(2+)-binding residues include His-115, His-117, Asp-119, His-178, and Cys-197. The substrate site is built by Lys-200 and Asn-209. His-239 provides a ligand contact to Zn(2+).

Belongs to the metallo-beta-lactamase superfamily. Class-B beta-lactamase family. In terms of assembly, monomer. Zn(2+) is required as a cofactor.

The protein resides in the periplasm. It catalyses the reaction a beta-lactam + H2O = a substituted beta-amino acid. With respect to regulation, inhibited by chelating agents such as EDTA. In terms of biological role, confers resistance to the different beta-lactams antibiotics (penicillin, cephalosporin and carbapenem) via the hydrolysis of the beta-lactam ring. Benzylpenicillin is a better substrate than cephalosporin C and ampicillin. The sequence is that of Metallo-beta-lactamase type 2 from Bacillus cereus.